A 493-amino-acid chain; its full sequence is Alpha-amylase-related protein (493 aa).

An N-terminal signal peptide occupies residues 1–19 (MFKFALTLTLCLAGSLSLA). Q20 carries the pyrrolidone carboxylic acid modification. C47 and C103 are joined by a disulfide. Ca(2+)-binding residues include N117, Q168, and D177. C156 and C170 form a disulfide bridge. A chloride-binding site is contributed by R205. D207 functions as the Nucleophile in the catalytic mechanism. H211 contacts Ca(2+). The active-site Proton donor is E244. Chloride-binding residues include N307 and R342. Cystine bridges form between C375/C381, C417/C440, and C447/C459.

It belongs to the glycosyl hydrolase 13 family. Monomer. The cofactor is Ca(2+). Requires chloride as cofactor.

Its subcellular location is the secreted. It catalyses the reaction Endohydrolysis of (1-&gt;4)-alpha-D-glucosidic linkages in polysaccharides containing three or more (1-&gt;4)-alpha-linked D-glucose units.. This chain is Alpha-amylase-related protein (Amyrel), found in Drosophila simulans (Fruit fly).